A 207-amino-acid polypeptide reads, in one-letter code: Thiamine-phosphate synthase (207 aa).

4-amino-2-methyl-5-(diphosphooxymethyl)pyrimidine is bound by residues 38–42 (QYRAK) and Asn-70. 2 residues coordinate Mg(2+): Asp-71 and Asp-90. Residue Thr-109 coordinates 4-amino-2-methyl-5-(diphosphooxymethyl)pyrimidine. 135–137 (TNS) contributes to the 2-[(2R,5Z)-2-carboxy-4-methylthiazol-5(2H)-ylidene]ethyl phosphate binding site. Lys-138 contributes to the 4-amino-2-methyl-5-(diphosphooxymethyl)pyrimidine binding site. 2-[(2R,5Z)-2-carboxy-4-methylthiazol-5(2H)-ylidene]ethyl phosphate contacts are provided by residues Gly-165 and 185–186 (IS).

It belongs to the thiamine-phosphate synthase family. Mg(2+) serves as cofactor.

It carries out the reaction 2-[(2R,5Z)-2-carboxy-4-methylthiazol-5(2H)-ylidene]ethyl phosphate + 4-amino-2-methyl-5-(diphosphooxymethyl)pyrimidine + 2 H(+) = thiamine phosphate + CO2 + diphosphate. The catalysed reaction is 2-(2-carboxy-4-methylthiazol-5-yl)ethyl phosphate + 4-amino-2-methyl-5-(diphosphooxymethyl)pyrimidine + 2 H(+) = thiamine phosphate + CO2 + diphosphate. The enzyme catalyses 4-methyl-5-(2-phosphooxyethyl)-thiazole + 4-amino-2-methyl-5-(diphosphooxymethyl)pyrimidine + H(+) = thiamine phosphate + diphosphate. It functions in the pathway cofactor biosynthesis; thiamine diphosphate biosynthesis; thiamine phosphate from 4-amino-2-methyl-5-diphosphomethylpyrimidine and 4-methyl-5-(2-phosphoethyl)-thiazole: step 1/1. Functionally, condenses 4-methyl-5-(beta-hydroxyethyl)thiazole monophosphate (THZ-P) and 2-methyl-4-amino-5-hydroxymethyl pyrimidine pyrophosphate (HMP-PP) to form thiamine monophosphate (TMP). In Clostridium perfringens (strain SM101 / Type A), this protein is Thiamine-phosphate synthase.